The following is a 484-amino-acid chain: tRNA sulfurtransferase (484 aa).

Positions 62–166 (GPVIDELVRI…DDSYHIAHRR (105 aa)) constitute a THUMP domain. ATP is bound by residues 184-185 (LI), Lys-266, Gly-288, and Gln-297. Cys-345 and Cys-456 are disulfide-bonded. The region spanning 404–482 (PSVDDVIIDV…GHGNIKVYAP (79 aa)) is the Rhodanese domain. The active-site Cysteine persulfide intermediate is the Cys-456.

Belongs to the ThiI family.

Its subcellular location is the cytoplasm. It catalyses the reaction [ThiI sulfur-carrier protein]-S-sulfanyl-L-cysteine + a uridine in tRNA + 2 reduced [2Fe-2S]-[ferredoxin] + ATP + H(+) = [ThiI sulfur-carrier protein]-L-cysteine + a 4-thiouridine in tRNA + 2 oxidized [2Fe-2S]-[ferredoxin] + AMP + diphosphate. It carries out the reaction [ThiS sulfur-carrier protein]-C-terminal Gly-Gly-AMP + S-sulfanyl-L-cysteinyl-[cysteine desulfurase] + AH2 = [ThiS sulfur-carrier protein]-C-terminal-Gly-aminoethanethioate + L-cysteinyl-[cysteine desulfurase] + A + AMP + 2 H(+). The protein operates within cofactor biosynthesis; thiamine diphosphate biosynthesis. In terms of biological role, catalyzes the ATP-dependent transfer of a sulfur to tRNA to produce 4-thiouridine in position 8 of tRNAs, which functions as a near-UV photosensor. Also catalyzes the transfer of sulfur to the sulfur carrier protein ThiS, forming ThiS-thiocarboxylate. This is a step in the synthesis of thiazole, in the thiamine biosynthesis pathway. The sulfur is donated as persulfide by IscS. This Marinobacter nauticus (strain ATCC 700491 / DSM 11845 / VT8) (Marinobacter aquaeolei) protein is tRNA sulfurtransferase.